We begin with the raw amino-acid sequence, 207 residues long: Ras-related protein Rab-8A (207 aa).

Residues S17, G18, V19, G20, K21, T22, C23, S35, S39, and T40 each contribute to the GTP site. Residue T22 coordinates Mg(2+). Short sequence motifs (switch) lie at residues 31–45 (DAFN…GIDF) and 63–80 (DTAG…YYRG). Mg(2+)-binding residues include T40 and D63. G66 contributes to the GTP binding site. At T72 the chain carries Phosphothreonine. The GTP site is built by N121, K122, D124, A152, and K153. A phosphoserine mark is found at S181 and S185. C204 is subject to Cysteine methyl ester. C204 is lipidated: S-geranylgeranyl cysteine. Positions 205–207 (VLL) are cleaved as a propeptide — removed in mature form.

This sequence belongs to the small GTPase superfamily. Rab family. As to quaternary structure, interacts (GTP-bound form) with MICALL1; regulates RAB8A association with recycling endosomes. Interacts with MICALL2; competes with RAB13 and is involved in E-cadherin endocytic recycling. Interacts (GTP-bound form) with MICAL1, MICALCL, MICAL3, EHBP1 and EHBP1L1; at least in case of MICAL1, MICALCL, MICAL3 and EHBP1L1 two molecules of RAB8A can bind to one molecule of the effector protein; ternary complexes of RAB8A, RAB13 and either MICAL1 or EHBP1L1 are possible. Interacts with EHD1. Interacts with MAP4K2 and SYTL4. Interacts with SGSM1 and SGSM3. Interacts with RABIF, RIMS2, RPH3A and RPH3A. Interacts with OPTN. Interacts with RAB3IP, RAB3IP functions as guanine exchange factor (GEF). Interacts with MYO5B. Interacts with CIMAP3. Interacts with BIRC6/bruce. Interacts with OCRL. Interacts with AHI1. Interacts with DCDC1. Interacts with LRRK2; interaction facilitates phosphorylation of Thr-72. Interacts with RAB31P, GDI1, GDI2, CHM, CHML, RABGGTA, RABGGTB, TBC1D15 and INPP5B; these interactions are dependent on Thr-72 not being phosphorylated. Interacts with RILPL1 and RILPL2; these interactions are dependent on the phosphorylation of Thr-72 by LRRK2. Interacts with DZIP1; prevents inhibition by the GDP-dissociation inhibitor GDI2. Interacts (in GDP-bound form) with RAB3IP/Rabin8, RAB3IP functions as guanine exchange factor (GEF) towards RAB8A. Interacts (in GDP-bound form) with RPGR, RPGR functions as GEF towards RAB8A. The cofactor is Mg(2+). Post-translationally, phosphorylation of Thr-72 in the switch II region by LRRK2 prevents the association of RAB regulatory proteins, including CHM, CHML and RAB GDP dissociation inhibitors GDI1 and GDI2. Phosphorylation by LRRK2 is required for localization to stressed lysosomes.

The protein localises to the cell membrane. It localises to the golgi apparatus. Its subcellular location is the endosome membrane. It is found in the recycling endosome membrane. The protein resides in the cell projection. The protein localises to the cilium. It localises to the cytoplasmic vesicle. Its subcellular location is the phagosome membrane. It is found in the cytoplasm. The protein resides in the cytoskeleton. The protein localises to the microtubule organizing center. It localises to the centrosome. Its subcellular location is the centriole. It is found in the cilium basal body. The protein resides in the midbody. The protein localises to the lysosome. The enzyme catalyses GTP + H2O = GDP + phosphate + H(+). With respect to regulation, regulated by guanine nucleotide exchange factors (GEFs) such as RAB3IP/Rabin8 and RPGR which promote the exchange of bound GDP for free GTP, GTPase activating proteins (GAPs) which increase the GTP hydrolysis activity, and GDP dissociation inhibitors (GDIs) which inhibit the dissociation of the nucleotide from the GTPase. Activated in response to insulin. In terms of biological role, the small GTPases Rab are key regulators of intracellular membrane trafficking, from the formation of transport vesicles to their fusion with membranes. Rabs cycle between an inactive GDP-bound form and an active GTP-bound form that is able to recruit to membranes different sets of downstream effectors directly responsible for vesicle formation, movement, tethering and fusion. RAB8A is involved in polarized vesicular trafficking and neurotransmitter release. Together with RAB11A, RAB3IP, the exocyst complex, PARD3, PRKCI, ANXA2, CDC42 and DNMBP promotes transcytosis of PODXL to the apical membrane initiation sites (AMIS), apical surface formation and lumenogenesis. Regulates the compacted morphology of the Golgi. Together with MYO5B and RAB11A participates in epithelial cell polarization. Also involved in membrane trafficking to the cilium and ciliogenesis. Together with MICALL2, may also regulate adherens junction assembly. May play a role in insulin-induced transport to the plasma membrane of the glucose transporter GLUT4 and therefore play a role in glucose homeostasis. Involved in autophagy. Participates in the export of a subset of neosynthesized proteins through a Rab8-Rab10-Rab11-dependent endososomal export route. Targeted to and stabilized on stressed lysosomes through LRRK2 phosphorylation. Suppresses stress-induced lysosomal enlargement through EHBP1 and EHNP1L1 effector proteins. The protein is Ras-related protein Rab-8A (RAB8A) of Pongo abelii (Sumatran orangutan).